A 396-amino-acid polypeptide reads, in one-letter code: S-adenosylmethionine synthase (396 aa).

His-15 provides a ligand contact to ATP. Asp-17 lines the Mg(2+) pocket. Position 43 (Glu-43) interacts with K(+). L-methionine is bound by residues Glu-56 and Gln-99. Residues 99-109 (QSSDIAMGVDK) are flexible loop. ATP contacts are provided by residues 175 to 177 (DGK), 241 to 242 (RF), Asp-250, 256 to 257 (RK), Ala-273, and Lys-277. Residue Asp-250 participates in L-methionine binding. Lys-281 is a binding site for L-methionine.

The protein belongs to the AdoMet synthase family. As to quaternary structure, homotetramer; dimer of dimers. Mg(2+) is required as a cofactor. It depends on K(+) as a cofactor.

Its subcellular location is the cytoplasm. It carries out the reaction L-methionine + ATP + H2O = S-adenosyl-L-methionine + phosphate + diphosphate. The protein operates within amino-acid biosynthesis; S-adenosyl-L-methionine biosynthesis; S-adenosyl-L-methionine from L-methionine: step 1/1. In terms of biological role, catalyzes the formation of S-adenosylmethionine (AdoMet) from methionine and ATP. The overall synthetic reaction is composed of two sequential steps, AdoMet formation and the subsequent tripolyphosphate hydrolysis which occurs prior to release of AdoMet from the enzyme. This is S-adenosylmethionine synthase from Ruminiclostridium cellulolyticum (strain ATCC 35319 / DSM 5812 / JCM 6584 / H10) (Clostridium cellulolyticum).